Here is a 110-residue protein sequence, read N- to C-terminus: U12-hexatoxin-Hi1a (110 aa).

An N-terminal signal peptide occupies residues 1–18 (MRVALVFLVLSILAATHG). 3 disulfides stabilise this stretch: Cys-72/Cys-86, Cys-79/Cys-91, and Cys-85/Cys-104.

Expressed by the venom gland.

The protein resides in the secreted. In terms of biological role, probable ion channel inhibitor. In Hadronyche infensa (Fraser island funnel-web spider), this protein is U12-hexatoxin-Hi1a.